Consider the following 319-residue polypeptide: Beta-ketoacyl-[acyl-carrier-protein] synthase III (319 aa).

Residues C113 and H246 contribute to the active site. The tract at residues 247–251 (QANLR) is ACP-binding. N276 is an active-site residue.

It belongs to the thiolase-like superfamily. FabH family. As to quaternary structure, homodimer.

Its subcellular location is the cytoplasm. It carries out the reaction malonyl-[ACP] + acetyl-CoA + H(+) = 3-oxobutanoyl-[ACP] + CO2 + CoA. It functions in the pathway lipid metabolism; fatty acid biosynthesis. Catalyzes the condensation reaction of fatty acid synthesis by the addition to an acyl acceptor of two carbons from malonyl-ACP. Catalyzes the first condensation reaction which initiates fatty acid synthesis and may therefore play a role in governing the total rate of fatty acid production. Possesses both acetoacetyl-ACP synthase and acetyl transacylase activities. Its substrate specificity determines the biosynthesis of branched-chain and/or straight-chain of fatty acids. This Laribacter hongkongensis (strain HLHK9) protein is Beta-ketoacyl-[acyl-carrier-protein] synthase III.